A 318-amino-acid polypeptide reads, in one-letter code: 5'-3' exonuclease (318 aa).

A 5'-3' exonuclease domain is found at 194–278 (AYAELALLRG…ATDAPVTLST (85 aa)).

5'-3' exonuclease acting preferentially on double-stranded DNA. This chain is 5'-3' exonuclease, found in Mycobacterium tuberculosis (strain ATCC 25618 / H37Rv).